Reading from the N-terminus, the 40-residue chain is Light-harvesting protein B800/830/1020 beta-1 chain (40 aa).

Topologically, residues 1–20 (ANDIRPLRDFEDEEAQEFHQ) are cytoplasmic. 2 residues coordinate a bacteriochlorophyll: His19 and His37. A helical membrane pass occupies residues 21 to 40 (AAVQAFFLYVAVAFVAHLPV).

The protein belongs to the antenna complex beta subunit family. The core complex is formed by different alpha and beta chains, binding bacteriochlorophyll molecules, and arranged most probably in tetrameric structures disposed around the reaction center. The non-pigmented gamma chains may constitute additional components.

It localises to the cell inner membrane. In terms of biological role, antenna complexes are light-harvesting systems, which transfer the excitation energy to the reaction centers. In Halorhodospira halochloris (Ectothiorhodospira halochloris), this protein is Light-harvesting protein B800/830/1020 beta-1 chain.